The primary structure comprises 213 residues: Adenylate kinase (213 aa).

10 to 15 (GAGKGT) contributes to the ATP binding site. The NMP stretch occupies residues 30–59 (STGDMFRAAMANQTEMGLLAKSYIDKGDLV). AMP contacts are provided by residues T31, R36, 57–59 (DLV), 86–89 (GYPR), and Q93. An LID region spans residues 127–160 (GRIIHKKTGETFHKIFNPPAGDYDENDYYQREDD). Residues R128 and 137 to 138 (TF) contribute to the ATP site. Residues R157 and R168 each contribute to the AMP site. An ATP-binding site is contributed by Q196.

It belongs to the adenylate kinase family. As to quaternary structure, monomer.

It localises to the cytoplasm. The enzyme catalyses AMP + ATP = 2 ADP. It functions in the pathway purine metabolism; AMP biosynthesis via salvage pathway; AMP from ADP: step 1/1. In terms of biological role, catalyzes the reversible transfer of the terminal phosphate group between ATP and AMP. Plays an important role in cellular energy homeostasis and in adenine nucleotide metabolism. This is Adenylate kinase from Streptococcus uberis (strain ATCC BAA-854 / 0140J).